The primary structure comprises 351 residues: MDLAELVEEIKKELSFAELKGKKISIDAYNALYQFLAAIRQPDGTPLMDSQGRVTSHLNGLFYRTISILEEGIIPIYVFDGKPPEQKAQELERRKKVKEEAEKKLEQAKTEGSIKTSELKKYAQMSIRLTNEMAEESKELLKAMGIPVVQAPSEGEAEAAYINILGLSWATASQDYDSLLFGAKRLIRNLTLSGKRKLPGKDVYVEIKPELIELDTLLKKLGLTREQLIDIGIIVGTDYNPDGIKGYGVKTAYRIIKKYGSLEKAIEKGEIPKIKVNFNVEEIRSLFLKPQVVEPKENLELVDCDSNKILDILVKTHDFNEERVKNGIERLEKAKREAKGASRQTGLDQWF.

Residues 1–98 (MDLAELVEEI…QELERRKKVK (98 aa)) are N-domain. 7 residues coordinate Mg(2+): aspartate 27, aspartate 80, glutamate 154, glutamate 156, aspartate 175, aspartate 177, and aspartate 238. Residues 118 to 260 (ELKKYAQMSI…TAYRIIKKYG (143 aa)) are I-domain. Residues 343-351 (RQTGLDQWF) are interaction with PCNA.

The protein belongs to the XPG/RAD2 endonuclease family. FEN1 subfamily. As to quaternary structure, interacts with PCNA. PCNA stimulates the nuclease activity without altering cleavage specificity. The cofactor is Mg(2+).

Structure-specific nuclease with 5'-flap endonuclease and 5'-3' exonuclease activities involved in DNA replication and repair. During DNA replication, cleaves the 5'-overhanging flap structure that is generated by displacement synthesis when DNA polymerase encounters the 5'-end of a downstream Okazaki fragment. Binds the unpaired 3'-DNA end and kinks the DNA to facilitate 5' cleavage specificity. Cleaves one nucleotide into the double-stranded DNA from the junction in flap DNA, leaving a nick for ligation. Also involved in the base excision repair (BER) pathway. Acts as a genome stabilization factor that prevents flaps from equilibrating into structures that lead to duplications and deletions. Also possesses 5'-3' exonuclease activity on nicked or gapped double-stranded DNA. This is Flap endonuclease 1 from Sulfurisphaera tokodaii (strain DSM 16993 / JCM 10545 / NBRC 100140 / 7) (Sulfolobus tokodaii).